The following is a 132-amino-acid chain: Intraflagellar transport protein 20 homolog (132 aa).

The stretch at 87-114 (EAQQQQLYALIAEKKMQLERYRIEYEAL) forms a coiled coil.

It localises to the golgi apparatus. The protein resides in the cis-Golgi network. It is found in the cytoplasm. Its subcellular location is the cytoskeleton. The protein localises to the microtubule organizing center. It localises to the centrosome. The protein resides in the centriole. It is found in the cell projection. Its subcellular location is the cilium. The protein localises to the cytoplasmic vesicle. It localises to the secretory vesicle. The protein resides in the acrosome. Its function is as follows. Involved in ciliary process assembly. May play a role in the trafficking of ciliary membrane proteins from the Golgi complex to the cilium. Regulates the platelet-derived growth factor receptor-alpha (PDGFRA) signaling pathway. Plays an important role in spermatogenesis, particularly spermiogenesis, when germ cells form flagella. This Xenopus tropicalis (Western clawed frog) protein is Intraflagellar transport protein 20 homolog (ift20).